We begin with the raw amino-acid sequence, 1405 residues long: DNA-directed RNA polymerase subunit beta' (1405 aa).

Zn(2+) is bound by residues Cys70, Cys72, Cys85, and Cys88. Asp460, Asp462, and Asp464 together coordinate Mg(2+). Residues Cys814, Cys888, Cys895, and Cys898 each contribute to the Zn(2+) site.

It belongs to the RNA polymerase beta' chain family. The RNAP catalytic core consists of 2 alpha, 1 beta, 1 beta' and 1 omega subunit. When a sigma factor is associated with the core the holoenzyme is formed, which can initiate transcription. The cofactor is Mg(2+). Zn(2+) is required as a cofactor.

It carries out the reaction RNA(n) + a ribonucleoside 5'-triphosphate = RNA(n+1) + diphosphate. Its function is as follows. DNA-dependent RNA polymerase catalyzes the transcription of DNA into RNA using the four ribonucleoside triphosphates as substrates. This is DNA-directed RNA polymerase subunit beta' from Shewanella woodyi (strain ATCC 51908 / MS32).